Here is a 320-residue protein sequence, read N- to C-terminus: Cytochrome f (320 aa).

Residues 1–35 (MQTRKTLSWIKEEITRSISVSLMIYIITGAYISNA) form the signal peptide. Residues tyrosine 36, cysteine 56, cysteine 59, and histidine 60 each coordinate heme. The chain crosses the membrane as a helical span at residues 286–306 (VQGLLFFLASVILAQIFLVLK).

Belongs to the cytochrome f family. As to quaternary structure, the 4 large subunits of the cytochrome b6-f complex are cytochrome b6, subunit IV (17 kDa polypeptide, petD), cytochrome f and the Rieske protein, while the 4 small subunits are PetG, PetL, PetM and PetN. The complex functions as a dimer. Requires heme as cofactor.

Its subcellular location is the plastid. The protein localises to the chloroplast thylakoid membrane. Component of the cytochrome b6-f complex, which mediates electron transfer between photosystem II (PSII) and photosystem I (PSI), cyclic electron flow around PSI, and state transitions. In Populus alba (White poplar), this protein is Cytochrome f.